The following is a 1671-amino-acid chain: Kinesin-like protein unc-104 (1671 aa).

The 349-residue stretch at 3–351 folds into the Kinesin motor domain; the sequence is SVKVAVRVRP…LRYADRAKQI (349 aa). 97 to 104 is an ATP binding site; sequence GQTGAGKS. A coiled-coil region spans residues 358–437; sequence NEDANAKLIR…IAELNETWEE (80 aa). A disordered region spans residues 391-413; the sequence is DELNKSTTGIKSPSKSRNRNGST. A compositionally biased stretch (polar residues) spans 395-413; the sequence is KSTTGIKSPSKSRNRNGST. The FHA domain maps to 500–566; it reads TRLGTHEANV…LKTGSRVILG (67 aa). Residues 577 to 674 are a coiled coil; the sequence is EQARELREKI…EEQSMTMSMY (98 aa). A disordered region spans residues 949 to 973; sequence DVDSGRGIDSNSASDCPENAEEPGE. One can recognise a PH domain in the interval 1538-1636; that stretch reads VVARKGLLNV…WLYAINPLLA (99 aa).

This sequence belongs to the TRAFAC class myosin-kinesin ATPase superfamily. Kinesin family. Unc-104 subfamily. In terms of assembly, monomer.

It is found in the cytoplasm. It localises to the cytoskeleton. Its function is as follows. Required for presynaptic maturation, has a role in axonal transport of dense-core vesicles carrying synaptic vesicle precursors, components required for the morphological transformation of axonal growth cones to mature boutons. This is Kinesin-like protein unc-104 from Drosophila pseudoobscura pseudoobscura (Fruit fly).